A 232-amino-acid polypeptide reads, in one-letter code: Ribonuclease 3 (232 aa).

The 130-residue stretch at 5-134 (QTVLKNHFAI…FLGALLLDKD (130 aa)) folds into the RNase III domain. Residue E47 coordinates Mg(2+). The active site involves D51. Mg(2+) is bound by residues D120 and E123. The active site involves E123. Residues 160–229 (DYKTHLQELL…AKNAVEKGLD (70 aa)) enclose the DRBM domain.

Belongs to the ribonuclease III family. Homodimer. It depends on Mg(2+) as a cofactor.

Its subcellular location is the cytoplasm. The catalysed reaction is Endonucleolytic cleavage to 5'-phosphomonoester.. Its function is as follows. Digests double-stranded RNA. Involved in the processing of primary rRNA transcript to yield the immediate precursors to the large and small rRNAs (23S and 16S). Processes some mRNAs, and tRNAs when they are encoded in the rRNA operon. Processes pre-crRNA and tracrRNA of type II CRISPR loci if present in the organism. The protein is Ribonuclease 3 of Streptococcus pneumoniae (strain CGSP14).